A 415-amino-acid polypeptide reads, in one-letter code: Histidine--tRNA ligase (415 aa).

Belongs to the class-II aminoacyl-tRNA synthetase family. As to quaternary structure, homodimer.

The protein localises to the cytoplasm. The catalysed reaction is tRNA(His) + L-histidine + ATP = L-histidyl-tRNA(His) + AMP + diphosphate + H(+). The sequence is that of Histidine--tRNA ligase from Clostridium botulinum (strain Kyoto / Type A2).